The chain runs to 285 residues: Sulfotransferase 2A1 (285 aa).

Residues K44, S45, G46, T47, N48, and W49 each contribute to the 3'-phosphoadenylyl sulfate site. Catalysis depends on H99, which acts as the Proton acceptor. Residues R121, S129, Y184, S218, M223, R247, K248, and G249 each coordinate 3'-phosphoadenylyl sulfate. S251 bears the Phosphoserine mark.

It belongs to the sulfotransferase 1 family. Homodimer. Post-translationally, the N-terminus is blocked. As to expression, liver, adrenal and at lower level in the kidney. Is present in human fetus in higher level in the adrenal than the liver and the kidney.

The protein resides in the cytoplasm. It carries out the reaction an alcohol + 3'-phosphoadenylyl sulfate = an alkyl sulfate + adenosine 3',5'-bisphosphate + H(+). The enzyme catalyses (24S)-hydroxycholesterol + 3'-phosphoadenylyl sulfate = (24S)-hydroxycholesterol 24-sulfate + adenosine 3',5'-bisphosphate + H(+). It catalyses the reaction (24S)-hydroxycholesterol + 3'-phosphoadenylyl sulfate = (24S)-hydroxycholesterol 3-sulfate + adenosine 3',5'-bisphosphate + H(+). The catalysed reaction is (24S)-hydroxycholesterol 24-sulfate + 3'-phosphoadenylyl sulfate = (24S)-hydroxycholesterol 3,24-disulfate + adenosine 3',5'-bisphosphate + H(+). It carries out the reaction 3beta-hydroxyandrost-5-en-17-one + 3'-phosphoadenylyl sulfate = dehydroepiandrosterone 3-sulfate + adenosine 3',5'-bisphosphate + H(+). The enzyme catalyses pregnenolone + 3'-phosphoadenylyl sulfate = pregnenolone sulfate + adenosine 3',5'-bisphosphate + H(+). It catalyses the reaction androsterone + 3'-phosphoadenylyl sulfate = androsterone 3alpha-sulfate + adenosine 3',5'-bisphosphate + H(+). The catalysed reaction is taurolithocholate + 3'-phosphoadenylyl sulfate = taurolithocholate 3-sulfate + adenosine 3',5'-bisphosphate + H(+). It carries out the reaction lithocholate + 3'-phosphoadenylyl sulfate = lithocholate sulfate + adenosine 3',5'-bisphosphate + H(+). With respect to regulation, subject to substrate inhibition. Alternate orientations for binding of steroid substrates to SULT2A1 may play a role in substrate inhibition. In terms of biological role, sulfotransferase that utilizes 3'-phospho-5'-adenylyl sulfate (PAPS) as sulfonate donor to catalyze the sulfonation of steroids and bile acids in the liver and adrenal glands. Mediates the sulfation of a wide range of steroids and sterols, including pregnenolone, androsterone, DHEA, bile acids, cholesterol and as well many xenobiotics that contain alcohol and phenol functional groups. Sulfonation increases the water solubility of most compounds, and therefore their renal excretion, but it can also result in bioactivation to form active metabolites. Plays an important role in maintening steroid and lipid homeostasis. Plays a key role in bile acid metabolism. In addition, catalyzes the metabolic activation of potent carcinogenic polycyclic arylmethanols. In Homo sapiens (Human), this protein is Sulfotransferase 2A1 (SULT2A1).